The primary structure comprises 81 residues: Photosystem I iron-sulfur center (81 aa).

2 4Fe-4S ferredoxin-type domains span residues 2-31 (SHSVKIYDTCIGCTQCVRACPTDVLEMIPW) and 39-68 (IASAPRTEDCVGCKRCESACPTDFLSVRVY). The [4Fe-4S] cluster site is built by cysteine 11, cysteine 14, cysteine 17, cysteine 21, cysteine 48, cysteine 51, cysteine 54, and cysteine 58.

In terms of assembly, the eukaryotic PSI reaction center is composed of at least 11 subunits. [4Fe-4S] cluster serves as cofactor.

It localises to the plastid thylakoid membrane. It carries out the reaction reduced [plastocyanin] + hnu + oxidized [2Fe-2S]-[ferredoxin] = oxidized [plastocyanin] + reduced [2Fe-2S]-[ferredoxin]. Functionally, apoprotein for the two 4Fe-4S centers FA and FB of photosystem I (PSI); essential for photochemical activity. FB is the terminal electron acceptor of PSI, donating electrons to ferredoxin. The C-terminus interacts with PsaA/B/D and helps assemble the protein into the PSI complex. Required for binding of PsaD and PsaE to PSI. PSI is a plastocyanin-ferredoxin oxidoreductase, converting photonic excitation into a charge separation, which transfers an electron from the donor P700 chlorophyll pair to the spectroscopically characterized acceptors A0, A1, FX, FA and FB in turn. The chain is Photosystem I iron-sulfur center from Cuscuta gronovii (Common dodder).